Reading from the N-terminus, the 445-residue chain is Glucose-6-phosphate isomerase 2 (445 aa).

E285 functions as the Proton donor in the catalytic mechanism. Catalysis depends on residues H306 and K420.

This sequence belongs to the GPI family. Homodimer.

It localises to the cytoplasm. It carries out the reaction alpha-D-glucose 6-phosphate = beta-D-fructose 6-phosphate. It functions in the pathway carbohydrate biosynthesis; gluconeogenesis. The protein operates within carbohydrate degradation; glycolysis; D-glyceraldehyde 3-phosphate and glycerone phosphate from D-glucose: step 2/4. Functionally, catalyzes the reversible isomerization of glucose-6-phosphate to fructose-6-phosphate. This chain is Glucose-6-phosphate isomerase 2, found in Geobacillus stearothermophilus (Bacillus stearothermophilus).